The primary structure comprises 539 residues: Acid-sensing ion channel 4 (539 aa).

Over 1-68 (MPIEIVCKIK…GPGPHGLRRT (68 aa)) the chain is Cytoplasmic. The helical transmembrane segment at 69–89 (LWALALLTSLAAFLYQAASLA) threads the bilayer. Over 90-438 (RGYLTRPHLV…EQQAAYGLSA (349 aa)) the chain is Extracellular. Disulfide bonds link Cys118/Cys202 and Cys180/Cys187. Residues Asn191, Asn243, Asn341, and Asn376 are each glycosylated (N-linked (GlcNAc...) asparagine). 5 disulfide bridges follow: Cys296-Cys375, Cys318-Cys371, Cys322-Cys369, Cys331-Cys353, and Cys333-Cys345. Residues 439 to 459 (LLGDLGGQMGLFIGASILTLL) form a helical membrane-spanning segment. A GAS motif; ion selectivity filter motif is present at residues 452–454 (GAS). The Cytoplasmic portion of the chain corresponds to 460–539 (EILDYIYEVS…PGSLFEDFAC (80 aa)). A disordered region spans residues 500-531 (KEQSPCPSRGRAEGGGASSLLPNHHHPHGPPG).

Belongs to the amiloride-sensitive sodium channel (TC 1.A.6) family. ASIC4 subfamily. Homotrimer. Heterotrimer; with other ASIC proteins producing functional channels.

It is found in the cell membrane. In terms of biological role, does not exhibit measurable stand-alone pH-gated sodium channel activity but may form pH-gated heterotrimeric sodium channels. Its activity could also depend on alternative gating mechanisms. This is Acid-sensing ion channel 4 from Mus musculus (Mouse).